Here is a 342-residue protein sequence, read N- to C-terminus: Serpentine receptor class delta-33 (342 aa).

7 consecutive transmembrane segments (helical) span residues I26–L46, I62–M82, Y112–Y132, I148–I168, L205–W225, I261–F281, and Y287–I307.

The protein belongs to the nematode receptor-like protein srd family.

The protein localises to the membrane. In Caenorhabditis elegans, this protein is Serpentine receptor class delta-33 (srd-33).